Reading from the N-terminus, the 260-residue chain is Proliferating cell nuclear antigen (260 aa).

Residues 61–80 (RCDRNLAMGVNLSSMSKILK) mediate DNA binding. Lysine 164 is covalently cross-linked (Glycyl lysine isopeptide (Lys-Gly) (interchain with G-Cter in ubiquitin)). Residues serine 259 and serine 260 each carry the phosphoserine modification.

It belongs to the PCNA family. Homotrimer. Forms a complex with activator 1 heteropentamer in the presence of ATP. Component of the replisome complex. Monoubiquitinated by the ube2b-rad18 complex on Lys-164. Monoubiquitination at Lys-164 also takes place in undamaged proliferating cells, and is mediated by the dcx(dtl) complex, leading to enhance PCNA-dependent translesion DNA synthesis.

Its subcellular location is the nucleus. In terms of biological role, this protein is an auxiliary protein of DNA polymerase delta and is involved in the control of eukaryotic DNA replication by increasing the polymerase's processibility during elongation of the leading strand. In Danio rerio (Zebrafish), this protein is Proliferating cell nuclear antigen (pcna).